Here is a 242-residue protein sequence, read N- to C-terminus: Protein Thf1 (242 aa).

The stretch at 178–209 forms a coiled coil; it reads SSDKLQKDLDLYRSNLDKMQQLLTVIEDTLEA. The disordered stretch occupies residues 212-242; the sequence is KKRASQKLEKKPEVVEEKEHKENEEQQQSSN. The span at 217–235 shows a compositional bias: basic and acidic residues; that stretch reads QKLEKKPEVVEEKEHKENE.

The protein belongs to the THF1 family.

Its function is as follows. May be involved in photosynthetic membrane biogenesis. This Crocosphaera subtropica (strain ATCC 51142 / BH68) (Cyanothece sp. (strain ATCC 51142)) protein is Protein Thf1.